A 515-amino-acid chain; its full sequence is Probable cytosol aminopeptidase (515 aa).

Lysine 279 and aspartate 284 together coordinate Mn(2+). Residue lysine 291 is part of the active site. Positions 302, 361, and 363 each coordinate Mn(2+). Arginine 365 is a catalytic residue.

The protein belongs to the peptidase M17 family. The cofactor is Mn(2+).

It localises to the cytoplasm. The catalysed reaction is Release of an N-terminal amino acid, Xaa-|-Yaa-, in which Xaa is preferably Leu, but may be other amino acids including Pro although not Arg or Lys, and Yaa may be Pro. Amino acid amides and methyl esters are also readily hydrolyzed, but rates on arylamides are exceedingly low.. The enzyme catalyses Release of an N-terminal amino acid, preferentially leucine, but not glutamic or aspartic acids.. Functionally, presumably involved in the processing and regular turnover of intracellular proteins. Catalyzes the removal of unsubstituted N-terminal amino acids from various peptides. This is Probable cytosol aminopeptidase from Mycobacterium tuberculosis (strain ATCC 25177 / H37Ra).